The sequence spans 269 residues: Phycobilisome 37.5 kDa linker polypeptide, phycocyanin-associated, rod (269 aa).

The PBS-linker domain maps to 2–177 (TSSTAARQLG…IYRGYANSDR (176 aa)). Positions 217–269 (GQLYRVRVIQADRGRTTQIRRSIQEYLVSYDQLSPTLQRLNQRGSRVVNISPA) constitute a CpcD-like domain.

The protein belongs to the phycobilisome linker protein family.

The protein resides in the cellular thylakoid membrane. Functionally, rod linker protein, associated with phycocyanin. Linker polypeptides determine the state of aggregation and the location of the disk-shaped phycobiliprotein units within the phycobilisome and modulate their spectroscopic properties in order to mediate a directed and optimal energy transfer. This chain is Phycobilisome 37.5 kDa linker polypeptide, phycocyanin-associated, rod (cpcH2), found in Microchaete diplosiphon (Fremyella diplosiphon).